The chain runs to 316 residues: ATP synthase gamma chain (316 aa).

This sequence belongs to the ATPase gamma chain family. In terms of assembly, F-type ATPases have 2 components, CF(1) - the catalytic core - and CF(0) - the membrane proton channel. CF(1) has five subunits: alpha(3), beta(3), gamma(1), delta(1), epsilon(1). CF(0) has three main subunits: a, b and c.

It localises to the cellular thylakoid membrane. In terms of biological role, produces ATP from ADP in the presence of a proton gradient across the membrane. The gamma chain is believed to be important in regulating ATPase activity and the flow of protons through the CF(0) complex. In Prochlorococcus marinus (strain NATL2A), this protein is ATP synthase gamma chain.